We begin with the raw amino-acid sequence, 325 residues long: Isoaspartyl peptidase/L-asparaginase (325 aa).

The active-site Nucleophile is threonine 193. Substrate is bound by residues arginine 221–aspartate 224 and threonine 243–glycine 246.

This sequence belongs to the Ntn-hydrolase family. As to quaternary structure, heterotetramer of two alpha and two beta chains arranged as a dimer of alpha/beta heterodimers. Post-translationally, cleaved into an alpha and beta chain by autocatalysis; this activates the enzyme. The N-terminal residue of the beta subunit is responsible for the nucleophile hydrolase activity. In terms of tissue distribution, developing seeds.

It catalyses the reaction Cleavage of a beta-linked Asp residue from the N-terminus of a polypeptide.. Its function is as follows. Acts in asparagine catabolism but also in the final steps of protein degradation via hydrolysis of a range of isoaspartyl dipeptides. This is Isoaspartyl peptidase/L-asparaginase from Lupinus angustifolius (Narrow-leaved blue lupine).